A 258-amino-acid polypeptide reads, in one-letter code: Phosphate import ATP-binding protein PstB 1 (258 aa).

The ABC transporter domain occupies 5–247 (LDLTDVNIYY…EKIFSNPNQK (243 aa)). An ATP-binding site is contributed by 37 to 44 (GPSGCGKT).

The protein belongs to the ABC transporter superfamily. Phosphate importer (TC 3.A.1.7) family. In terms of assembly, the complex is composed of two ATP-binding proteins (PstB), two transmembrane proteins (PstC and PstA) and a solute-binding protein (PstS).

Its subcellular location is the cell membrane. It catalyses the reaction phosphate(out) + ATP + H2O = ADP + 2 phosphate(in) + H(+). Functionally, part of the ABC transporter complex PstSACB involved in phosphate import. Responsible for energy coupling to the transport system. The sequence is that of Phosphate import ATP-binding protein PstB 1 from Mycobacterium bovis (strain ATCC BAA-935 / AF2122/97).